The following is a 304-amino-acid chain: C-type lectin domain family 10 member A (304 aa).

The Cytoplasmic portion of the chain corresponds to methionine 1–histidine 35. Residues leucine 36–serine 56 form a helical; Signal-anchor for type II membrane protein membrane-spanning segment. Residues glutamine 57–serine 304 lie on the Extracellular side of the membrane. Residues asparagine 74 and asparagine 166 are each glycosylated (N-linked (GlcNAc...) asparagine). The region spanning cysteine 172 to methionine 298 is the C-type lectin domain. 3 disulfides stabilise this stretch: cysteine 173-cysteine 184, cysteine 201-cysteine 296, and cysteine 274-cysteine 288.

Homooligomer. Interacts with SIGLEC1, which may act as a counter-receptor for CLEC10A in lymph node. As to expression, detected in lymph node in the subcapsular sinus, interfollicular regions, T and B-cell boundary and in the areas surrounding high endothelial venules (at protein level). Expressed on the surface of activated macrophages. Expressed in heart, lung, testis, skeletal muscle, spleen, brain, kidney and thymus. Expressed in P388, RAW 264.7 and M1 cell lines.

It localises to the membrane. Recognizes terminal galactose and N-acetylgalactosamine units. May participate in the interaction between tumoricidal macrophages and tumor cells. Plays a role in the recruitment of inflammatory monocytes to adipose tissue in diet-induced obesity. The polypeptide is C-type lectin domain family 10 member A (Clec10a) (Mus musculus (Mouse)).